A 340-amino-acid chain; its full sequence is 3-isopropylmalate dehydrogenase (340 aa).

4 residues coordinate substrate: Arg88, Arg98, Arg122, and Asp212. Mg(2+) is bound by residues Asp212, Asp236, and Asp240. NAD(+) is bound at residue 272–284 (GSAPDIMGKGIAD).

Belongs to the isocitrate and isopropylmalate dehydrogenases family. LeuB type 2 subfamily. As to quaternary structure, homodimer. Mg(2+) is required as a cofactor. Requires Mn(2+) as cofactor.

It is found in the cytoplasm. It catalyses the reaction (2R,3S)-3-isopropylmalate + NAD(+) = 4-methyl-2-oxopentanoate + CO2 + NADH. Its pathway is amino-acid biosynthesis; L-leucine biosynthesis; L-leucine from 3-methyl-2-oxobutanoate: step 3/4. In terms of biological role, catalyzes the oxidation of 3-carboxy-2-hydroxy-4-methylpentanoate (3-isopropylmalate) to 3-carboxy-4-methyl-2-oxopentanoate. The product decarboxylates to 4-methyl-2 oxopentanoate. The sequence is that of 3-isopropylmalate dehydrogenase from Corynebacterium efficiens (strain DSM 44549 / YS-314 / AJ 12310 / JCM 11189 / NBRC 100395).